The sequence spans 289 residues: Phosphatidylglycerol--prolipoprotein diacylglyceryl transferase (289 aa).

7 consecutive transmembrane segments (helical) span residues 23-43 (ALHW…WLAV), 61-81 (LLYM…VLFY), 99-119 (GGMS…WFAH), 125-145 (FFQV…AGRL), 199-219 (SQLY…NLFI), 226-246 (GSVS…TEFF), and 259-279 (LFSM…LMMV). Arginine 144 serves as a coordination point for a 1,2-diacyl-sn-glycero-3-phospho-(1'-sn-glycerol).

This sequence belongs to the Lgt family.

It is found in the cell inner membrane. The catalysed reaction is L-cysteinyl-[prolipoprotein] + a 1,2-diacyl-sn-glycero-3-phospho-(1'-sn-glycerol) = an S-1,2-diacyl-sn-glyceryl-L-cysteinyl-[prolipoprotein] + sn-glycerol 1-phosphate + H(+). It participates in protein modification; lipoprotein biosynthesis (diacylglyceryl transfer). Functionally, catalyzes the transfer of the diacylglyceryl group from phosphatidylglycerol to the sulfhydryl group of the N-terminal cysteine of a prolipoprotein, the first step in the formation of mature lipoproteins. The sequence is that of Phosphatidylglycerol--prolipoprotein diacylglyceryl transferase from Pectobacterium carotovorum subsp. carotovorum (strain PC1).